Reading from the N-terminus, the 619-residue chain is Mitochondrial Rho GTPase 1-A (619 aa).

Residues 1-593 (MRKDVRILLV…TQADLKNSTF (593 aa)) lie on the Cytoplasmic side of the membrane. Residues 2–168 (RKDVRILLVG…FYYAQKAVLH (167 aa)) enclose the Miro 1 domain. GTP contacts are provided by K14, G16, K17, T18, and S19. T18 contributes to the Mg(2+) binding site. Mg(2+)-binding residues include P35 and D57. Residues S59, N118, K119, D121, A149, and K150 each contribute to the GTP site. EF-hand domains follow at residues 184-219 (SCIK…CFNI) and 304-339 (NAYL…FPYM). Positions 197, 199, 201, 208, 317, 319, 321, 323, and 328 each coordinate Ca(2+). Positions 416 to 580 (RSVFRCNVLG…YTKLTTMAMY (165 aa)) constitute a Miro 2 domain. GTP is bound by residues R427, C429, G430, K431, S432, G433, K447, K529, D531, T559, and C560. R427 contacts Mg(2+). A helical; Anchor for type IV membrane protein transmembrane segment spans residues 594–616 (WLRASVGATVFAVLGFAMYKALL). Over 617-619 (KQR) the chain is Mitochondrial intermembrane.

It belongs to the mitochondrial Rho GTPase family. In terms of assembly, homodimer.

It is found in the mitochondrion outer membrane. It catalyses the reaction GTP + H2O = GDP + phosphate + H(+). The catalysed reaction is ATP + H2O = ADP + phosphate + H(+). It carries out the reaction UTP + H2O = UDP + phosphate + H(+). Its function is as follows. Atypical mitochondrial nucleoside-triphosphatase (NTPase) involved in mitochondrial trafficking. Probably involved in control of anterograde transport of mitochondria and their subcellular distribution. Can hydrolyze GTP, ATP and UTP. The polypeptide is Mitochondrial Rho GTPase 1-A (rhot1a) (Danio rerio (Zebrafish)).